The chain runs to 128 residues: Probable 4-amino-4-deoxy-L-arabinose-phosphoundecaprenol flippase subunit ArnF (128 aa).

At Met-1–Gly-2 the chain is on the cytoplasmic side. The helical transmembrane segment at Leu-3–Ala-23 threads the bilayer. Residues Ala-24–Asp-35 lie on the Periplasmic side of the membrane. Residues Phe-36 to Gly-56 form a helical membrane-spanning segment. Over Tyr-57 to Lys-75 the chain is Cytoplasmic. A helical transmembrane segment spans residues Ala-76–Gly-96. Over Arg-97–Thr-100 the chain is Periplasmic. The helical transmembrane segment at Phe-101–Leu-121 threads the bilayer. Topologically, residues Pro-122–Tyr-128 are cytoplasmic.

Belongs to the ArnF family. Heterodimer of ArnE and ArnF.

The protein resides in the cell inner membrane. It participates in bacterial outer membrane biogenesis; lipopolysaccharide biosynthesis. Functionally, translocates 4-amino-4-deoxy-L-arabinose-phosphoundecaprenol (alpha-L-Ara4N-phosphoundecaprenol) from the cytoplasmic to the periplasmic side of the inner membrane. The polypeptide is Probable 4-amino-4-deoxy-L-arabinose-phosphoundecaprenol flippase subunit ArnF (Shigella flexneri serotype 5b (strain 8401)).